Consider the following 185-residue polypeptide: Thioredoxin F2, chloroplastic (185 aa).

Positions 59–184 constitute a Thioredoxin domain; the sequence is RRIGSCVVRC…LLAAIEAARS (126 aa). Residues Cys109 and Cys112 each act as nucleophile in the active site. Cys109 and Cys112 are joined by a disulfide. Cys136 bears the S-glutathionyl cysteine; transient mark.

Belongs to the thioredoxin family. Plant F-type subfamily. Post-translationally, glutathionylation at Cys-136 decreases its ability to be reduced by ferredoxin-thioredoxin reductase and reduces its efficiency in activating target chloroplastic enzymes.

The protein resides in the plastid. The protein localises to the chloroplast stroma. Probable thiol-disulfide oxidoreductase involved in the redox regulation of enzymes of both reductive pentose phosphate pathway (Calvin-Benson cycle) and oxidative pentose phosphate pathway. This Arabidopsis thaliana (Mouse-ear cress) protein is Thioredoxin F2, chloroplastic.